The following is a 335-amino-acid chain: Cell division protein ZipA (335 aa).

Topologically, residues 1–4 (MDLN) are periplasmic. Residues 5–25 (AILIILGVIALIILVAHGIWS) form a helical membrane-spanning segment. Residues 26 to 335 (NRREKSQYFE…AERDYLARVS (310 aa)) are Cytoplasmic-facing.

It belongs to the ZipA family. In terms of assembly, interacts with FtsZ via their C-terminal domains.

Its subcellular location is the cell inner membrane. Functionally, essential cell division protein that stabilizes the FtsZ protofilaments by cross-linking them and that serves as a cytoplasmic membrane anchor for the Z ring. Also required for the recruitment to the septal ring of downstream cell division proteins. The protein is Cell division protein ZipA of Histophilus somni (strain 2336) (Haemophilus somnus).